A 439-amino-acid chain; its full sequence is Alpha-1,3-mannosyl-glycoprotein 4-beta-N-acetylglucosaminyltransferase-like protein MGAT4E (439 aa).

Its pathway is protein modification; protein glycosylation. Functionally, glycosyltransferase-like protein that may participate in the transfer of N-acetylglucosamine (GlcNAc) to the core mannose residues of N-linked glycans. In Mus musculus (Mouse), this protein is Alpha-1,3-mannosyl-glycoprotein 4-beta-N-acetylglucosaminyltransferase-like protein MGAT4E.